The following is a 372-amino-acid chain: tRNA 2-selenouridine synthase (372 aa).

One can recognise a Rhodanese domain in the interval 19-142 (LASGHPIMDV…MRQYLIDTID (124 aa)). C102 acts as the S-selanylcysteine intermediate in catalysis.

The protein belongs to the SelU family. In terms of assembly, monomer.

It carries out the reaction 5-methylaminomethyl-2-thiouridine(34) in tRNA + selenophosphate + (2E)-geranyl diphosphate + H2O + H(+) = 5-methylaminomethyl-2-selenouridine(34) in tRNA + (2E)-thiogeraniol + phosphate + diphosphate. The catalysed reaction is 5-methylaminomethyl-2-thiouridine(34) in tRNA + (2E)-geranyl diphosphate = 5-methylaminomethyl-S-(2E)-geranyl-thiouridine(34) in tRNA + diphosphate. It catalyses the reaction 5-methylaminomethyl-S-(2E)-geranyl-thiouridine(34) in tRNA + selenophosphate + H(+) = 5-methylaminomethyl-2-(Se-phospho)selenouridine(34) in tRNA + (2E)-thiogeraniol. The enzyme catalyses 5-methylaminomethyl-2-(Se-phospho)selenouridine(34) in tRNA + H2O = 5-methylaminomethyl-2-selenouridine(34) in tRNA + phosphate. Functionally, involved in the post-transcriptional modification of the uridine at the wobble position (U34) of tRNA(Lys), tRNA(Glu) and tRNA(Gln). Catalyzes the conversion of 2-thiouridine (S2U-RNA) to 2-selenouridine (Se2U-RNA). Acts in a two-step process involving geranylation of 2-thiouridine (S2U) to S-geranyl-2-thiouridine (geS2U) and subsequent selenation of the latter derivative to 2-selenouridine (Se2U) in the tRNA chain. This Shewanella loihica (strain ATCC BAA-1088 / PV-4) protein is tRNA 2-selenouridine synthase.